The sequence spans 888 residues: C2H2 zinc finger transcription factor sltA (888 aa).

Disordered regions lie at residues 1–78 (MSTS…QRSP), 132–176 (IDSQ…SSEN), and 388–407 (RSSM…ASAP). 3 stretches are compositionally biased toward polar residues: residues 23-32 (PSLSASTSIE), 167-176 (GLGTSLSSEN), and 388-397 (RSSMPSNREP). 2 C2H2-type zinc fingers span residues 500-522 (QKCK…EKTH) and 561-586 (YKCK…EKAH). Positions 589–663 (DYVRSKHNGR…PTQTGSGDFP (75 aa)) are disordered. Residues 602-632 (KASNGATPQTPSIATPSSKAQGITTPLTGSE) show a composition bias toward polar residues.

It is found in the nucleus. Its function is as follows. Transcription factor that contributes to azole resistance by coregulating the expression of the drug target erg11A and the drug efflux pump mdr1. Binds to the 5'-AGGCA-3' motif in the promoters of ergosterol biosynthesis and drug pump genes to regulate their expression. Is able to interact with the promoters of sltA, sltB, erg11A, erg13A, erg24A, mdr1, abcE and mfsC. Involved in antifungal drug resistance to azoles, terbinafine, and simvastatin but not amphotericin B or caspofungin. The sequence is that of C2H2 zinc finger transcription factor sltA from Aspergillus fumigatus (strain CBS 144.89 / FGSC A1163 / CEA10) (Neosartorya fumigata).